The chain runs to 39 residues: Large ribosomal subunit protein bL36 (39 aa).

The protein belongs to the bacterial ribosomal protein bL36 family.

The sequence is that of Large ribosomal subunit protein bL36 from Lactiplantibacillus plantarum (strain ATCC BAA-793 / NCIMB 8826 / WCFS1) (Lactobacillus plantarum).